A 129-amino-acid chain; its full sequence is Chorion class A protein L11 (129 aa).

A signal peptide spans 1–21 (MSTFAFLLLCVQACLIQNVYG). The interval 22 to 64 (QCLGRGLGGCGCGGGLGGYGLGYGLGGYGGGYGYGGYGGGYYG) is left arm. Residues 65-112 (GYGGEGVGNVGVAGVLPVGGVTAVGGRVPIIGGVEFGGPACAGGCVSI) form a central domain region. Residues 113–129 (CGHCAPTCGCGYGGLYY) are right arm.

This sequence belongs to the chorion protein family.

Its function is as follows. This protein is one of many from the eggshell of the silk moth. In Bombyx mori (Silk moth), this protein is Chorion class A protein L11.